The sequence spans 383 residues: 8-amino-7-oxononanoate synthase (383 aa).

Residue arginine 22 participates in substrate binding. A pyridoxal 5'-phosphate-binding site is contributed by 109–110 (GF). Residue histidine 134 coordinates substrate. Pyridoxal 5'-phosphate is bound by residues serine 178, histidine 206, and threonine 232. Lysine 235 is subject to N6-(pyridoxal phosphate)lysine. Threonine 348 contributes to the substrate binding site.

The protein belongs to the class-II pyridoxal-phosphate-dependent aminotransferase family. BioF subfamily. In terms of assembly, homodimer. The cofactor is pyridoxal 5'-phosphate.

The enzyme catalyses 6-carboxyhexanoyl-[ACP] + L-alanine + H(+) = (8S)-8-amino-7-oxononanoate + holo-[ACP] + CO2. It functions in the pathway cofactor biosynthesis; biotin biosynthesis. Its function is as follows. Catalyzes the decarboxylative condensation of pimeloyl-[acyl-carrier protein] and L-alanine to produce 8-amino-7-oxononanoate (AON), [acyl-carrier protein], and carbon dioxide. This Vibrio campbellii (strain ATCC BAA-1116) protein is 8-amino-7-oxononanoate synthase.